Consider the following 394-residue polypeptide: Elongation factor Tu (394 aa).

The region spanning 10 to 204 (KPHVNIGTIG…AVDSYIPQPV (195 aa)) is the tr-type G domain. Residues 19 to 26 (GHVDHGKT) are G1. 19 to 26 (GHVDHGKT) serves as a coordination point for GTP. T26 is a binding site for Mg(2+). Residues 60 to 64 (GITIS) form a G2 region. The G3 stretch occupies residues 81–84 (DCPG). Residues 81 to 85 (DCPGH) and 136 to 139 (NKVD) contribute to the GTP site. Residues 136-139 (NKVD) form a G4 region. The tract at residues 174-176 (SAL) is G5.

The protein belongs to the TRAFAC class translation factor GTPase superfamily. Classic translation factor GTPase family. EF-Tu/EF-1A subfamily. In terms of assembly, monomer.

It is found in the cytoplasm. The enzyme catalyses GTP + H2O = GDP + phosphate + H(+). GTP hydrolase that promotes the GTP-dependent binding of aminoacyl-tRNA to the A-site of ribosomes during protein biosynthesis. This chain is Elongation factor Tu, found in Rickettsia rhipicephali.